The following is a 93-amino-acid chain: Small ribosomal subunit protein bS16 (93 aa).

Belongs to the bacterial ribosomal protein bS16 family.

The chain is Small ribosomal subunit protein bS16 from Dictyoglomus thermophilum (strain ATCC 35947 / DSM 3960 / H-6-12).